Consider the following 650-residue polypeptide: MDSGDATSLLLTKIRSLEPDYAPKIIGYLLLHDFGDRDLMHLARGPESILQSTISKVKSLLGIFSNNSPSSTPTSPSPLNPICRPPLNGRGSSHSNGFMDFRRNSPSSPSSTSPWSFNNCINGNNGNNPHISPKHTPISKPFSSHQSNGLSATHSGSADAAGGADLLDDQQLNDCLSFLDDSCSKTEDLVDPSIPLDYSVDGDGETHLHRRSFSCDASFVSGDDGFGGGCKPCVYFSRGLCKNGESCKFIHGGYPDNMDGNGIVADSPRKMENFVRQHEEMMRLKLAYQQQRLASQILGRAPQLPYEKRMDFLLQQHAQRDGGLPFGDERFWSSSPGRLERMELAMHLGDQSNSASRQIYLTFPADSTFKDEDVATYFSLFGTVQDVRIPYQQKRMFGFVSFAHPETVKVVLARGNPHFICDSRVLVKPYKEKGKVLDKKQQQLLQQQIERGNYSPCSSPSGIDPREQSDFHLGSKMLYERREMMRRKIEQADLLRAIELERRRFINLQLPEFKNSVTLNHHRSFSVGSPGYFSSAGNQSPDFQSELNGADALKVTDDTLELHPYPVVNPMSVNNSYSNGAKEETNKSELLDPDSGSTIELVLPSNLFPSASSTDDHKTDDSAETNAKVGVSSTNENDHEPPVTTNNLMQ.

The segment at 67 to 162 is disordered; the sequence is NSPSSTPTSP…THSGSADAAG (96 aa). Residues 105–128 show a composition bias toward low complexity; that stretch reads SPSSPSSTSPWSFNNCINGNNGNN. Residues 141-154 are compositionally biased toward polar residues; the sequence is PFSSHQSNGLSATH. A C3H1-type zinc finger spans residues 232–254; the sequence is PCVYFSRGLCKNGESCKFIHGGY. The region spanning 357–433 is the RRM domain; the sequence is RQIYLTFPAD…RVLVKPYKEK (77 aa). The tract at residues 566–650 is disordered; the sequence is PVVNPMSVNN…PPVTTNNLMQ (85 aa). Over residues 581 to 590 the composition is skewed to basic and acidic residues; the sequence is AKEETNKSEL.

The sequence is that of Zinc finger CCCH domain-containing protein 55 from Arabidopsis thaliana (Mouse-ear cress).